The sequence spans 264 residues: Thymidylate synthase (264 aa).

Residue Arg-21 participates in dUMP binding. Position 51 (His-51) interacts with (6R)-5,10-methylene-5,6,7,8-tetrahydrofolate. 126–127 serves as a coordination point for dUMP; the sequence is RR. Cys-146 serves as the catalytic Nucleophile. DUMP-binding positions include 166 to 169, Asn-177, and 207 to 209; these read RSAD and HIY. Asp-169 provides a ligand contact to (6R)-5,10-methylene-5,6,7,8-tetrahydrofolate. Ser-263 is a (6R)-5,10-methylene-5,6,7,8-tetrahydrofolate binding site.

This sequence belongs to the thymidylate synthase family. Bacterial-type ThyA subfamily. As to quaternary structure, homodimer.

The protein localises to the cytoplasm. It carries out the reaction dUMP + (6R)-5,10-methylene-5,6,7,8-tetrahydrofolate = 7,8-dihydrofolate + dTMP. It functions in the pathway pyrimidine metabolism; dTTP biosynthesis. Catalyzes the reductive methylation of 2'-deoxyuridine-5'-monophosphate (dUMP) to 2'-deoxythymidine-5'-monophosphate (dTMP) while utilizing 5,10-methylenetetrahydrofolate (mTHF) as the methyl donor and reductant in the reaction, yielding dihydrofolate (DHF) as a by-product. This enzymatic reaction provides an intracellular de novo source of dTMP, an essential precursor for DNA biosynthesis. This is Thymidylate synthase from Halalkalibacterium halodurans (strain ATCC BAA-125 / DSM 18197 / FERM 7344 / JCM 9153 / C-125) (Bacillus halodurans).